A 370-amino-acid polypeptide reads, in one-letter code: NSFL1 cofactor p47 (370 aa).

A disordered region spans residues 54-73 (SQATPSSVSRGTAPSDNRVT). A phosphoserine mark is found at serine 74, serine 102, serine 114, and serine 140. 2 disordered regions span residues 80-116 (HDQD…KSPN) and 138-157 (TKSP…GYRL). Positions 109-115 (PPRKKSP) match the Nuclear localization signal motif. Phosphotyrosine is present on tyrosine 167. The Nuclear localization signal motif lies at 172-175 (RRRH). 3 positions are modified to phosphoserine: serine 176, serine 192, and serine 272. The 66-residue stretch at 179 to 244 (DVHVVLKLWK…MEDHRDEDFV (66 aa)) folds into the SEP domain. The region spanning 291 to 368 (EAEPTTNIQI…NLLNAVIVQR (78 aa)) is the UBX domain.

Belongs to the NSFL1C family. As to quaternary structure, part of a ternary complex containing STX5A, NSFL1C and VCP. NSFL1C forms a homotrimer that binds to one end of a VCP homohexamer. The complex binds to membranes enriched in phosphatidylethanolamine-containing lipids and promotes Golgi membrane fusion. Interaction with VCIP135 leads to dissociation of the complex via ATP hydrolysis by VCP. Binds ubiquitin and mono-ubiquitinated proteins via its N-terminal UBA-like domain when bound to VCP. In terms of processing, phosphorylated during mitosis. Phosphorylation inhibits interaction with Golgi membranes and is required for the fragmentation of the Golgi stacks during mitosis.

The protein resides in the nucleus. It localises to the golgi apparatus. It is found in the golgi stack. Its subcellular location is the chromosome. The protein localises to the cytoplasm. The protein resides in the cytoskeleton. It localises to the microtubule organizing center. It is found in the centrosome. Reduces the ATPase activity of VCP. Necessary for the fragmentation of Golgi stacks during mitosis and for VCP-mediated reassembly of Golgi stacks after mitosis. May play a role in VCP-mediated formation of transitional endoplasmic reticulum (tER). Inhibits the activity of CTSL (in vitro). Together with UBXN2B/p37, regulates the centrosomal levels of kinase AURKA/Aurora A during mitotic progression by promoting AURKA removal from centrosomes in prophase. Also, regulates spindle orientation during mitosis. The protein is NSFL1 cofactor p47 (Nsfl1c) of Mus musculus (Mouse).